The following is a 492-amino-acid chain: Monocarboxylate transporter 3 (492 aa).

Over 1-14 (MGAGGPRRGAGPPD) the chain is Cytoplasmic. The chain crosses the membrane as a helical span at residues 15–35 (GGWGWVVLGACFVVTGFAYGF). Topologically, residues 36-58 (PKAVSVFFRELKRDFGAGYSDTA) are extracellular. The chain crosses the membrane as a helical span at residues 59-79 (WVSSIMLAMLYGTGPLSSILV). Residues 80–85 (TRFGCR) lie on the Cytoplasmic side of the membrane. Residues 86–106 (PVMLAGGLLASAGMILASFAS) form a helical membrane-spanning segment. At 107–115 (RLVELYLTA) the chain is on the extracellular side. A helical transmembrane segment spans residues 116-136 (GVLTGLGLALNFQPSLIMLGL). The Cytoplasmic portion of the chain corresponds to 137 to 146 (YFERRRPLAN). The chain crosses the membrane as a helical span at residues 147-167 (GLAAAGSPVFLSMLSPLGQLL). Residues 168–172 (GERFG) are Extracellular-facing. The chain crosses the membrane as a helical span at residues 173–193 (WRGGFLLFGGLLLHCCACGAV). Residues 194–228 (MRPPPGPPPRRDPSPHGGPARRRRLLDVAVCTDRA) lie on the Cytoplasmic side of the membrane. A helical transmembrane segment spans residues 229 to 249 (FVVYVVTKFLMALGLFVPAIL). Residues 250–257 (LVNYAKDA) are Extracellular-facing. The chain crosses the membrane as a helical span at residues 258–278 (GVPDAEAAFLLSIVGFVDIVA). Topologically, residues 279–293 (RPACGALAGLGRLRP) are cytoplasmic. Residues 294–314 (HVPYLFSLALLANGLTDLISA) traverse the membrane as a helical segment. Residues 315–318 (RARS) lie on the Extracellular side of the membrane. A helical membrane pass occupies residues 319-339 (YGTLVAFCIAFGLSYGMVGAL). At 340–352 (QFEVLMATVGAPR) the chain is on the cytoplasmic side. The chain crosses the membrane as a helical span at residues 353-373 (FPSALGLVLLVEAVAVLIGPP). The Extracellular portion of the chain corresponds to 374–386 (SAGRLVDALKNYE). Residues 387–407 (IIFYLAGSEVALAGVFMAVTT) form a helical membrane-spanning segment. Residues 408–492 (YCCLRCSKNI…GGHEARGQKA (85 aa)) lie on the Cytoplasmic side of the membrane. The segment at 419–492 (SGRSAEGGAS…GGHEARGQKA (74 aa)) is disordered. 2 basolateral sorting signal regions span residues 426-460 (GASD…VLSP) and 461-482 (RAGS…HESI). Basic and acidic residues predominate over residues 476 to 492 (ELDHESIGGHEARGQKA).

Belongs to the major facilitator superfamily. Monocarboxylate porter (TC 2.A.1.13) family. In terms of tissue distribution, expressed exclusively in retinal pigment epithelium and choroid plexus epithelium.

It is found in the basolateral cell membrane. It catalyses the reaction (S)-lactate(in) + H(+)(in) = (S)-lactate(out) + H(+)(out). Functionally, probable retinal pigment epithelium (RPE)-specific proton-coupled L-lactate transporter. May facilitate transport of lactate and H(+) out of the retina and could therefore play an essential role in maintenance of metabolic and ionic homeostasis of the outer retina. This Mus musculus (Mouse) protein is Monocarboxylate transporter 3 (Slc16a8).